Here is a 356-residue protein sequence, read N- to C-terminus: Glutamate 5-kinase (356 aa).

An ATP-binding site is contributed by K6. Residues S46, D135, and N147 each contribute to the substrate site. 202–208 (TGGMRSK) is a binding site for ATP. The PUA domain maps to 265-342 (KGIIVVDRGA…SEVRKLLNTT (78 aa)).

The protein belongs to the glutamate 5-kinase family.

The protein resides in the cytoplasm. It catalyses the reaction L-glutamate + ATP = L-glutamyl 5-phosphate + ADP. Its pathway is amino-acid biosynthesis; L-proline biosynthesis; L-glutamate 5-semialdehyde from L-glutamate: step 1/2. In terms of biological role, catalyzes the transfer of a phosphate group to glutamate to form L-glutamate 5-phosphate. The sequence is that of Glutamate 5-kinase from Aquifex aeolicus (strain VF5).